The following is a 188-amino-acid chain: GMP synthase [glutamine-hydrolyzing] subunit A (188 aa).

Residues 1–188 (MIIIMDNGGQ…RNFAKICGEL (188 aa)) enclose the Glutamine amidotransferase type-1 domain. The Nucleophile role is filled by cysteine 78. Active-site residues include histidine 165 and glutamate 167.

Heterodimer composed of a glutamine amidotransferase subunit (A) and a GMP-binding subunit (B).

The enzyme catalyses XMP + L-glutamine + ATP + H2O = GMP + L-glutamate + AMP + diphosphate + 2 H(+). It participates in purine metabolism; GMP biosynthesis; GMP from XMP (L-Gln route): step 1/1. Its function is as follows. Catalyzes the synthesis of GMP from XMP. The chain is GMP synthase [glutamine-hydrolyzing] subunit A from Pyrococcus furiosus (strain ATCC 43587 / DSM 3638 / JCM 8422 / Vc1).